Reading from the N-terminus, the 1464-residue chain is Glutamate receptor ionotropic, NMDA 2A (1464 aa).

The N-terminal stretch at 1–22 is a signal peptide; the sequence is MGRVGYWTLLVLPALLVWRGPA. At 23–556 the chain is on the extracellular side; the sequence is PSAAAEKGPP…SAFLEPFSAS (534 aa). H44 contributes to the Zn(2+) binding site. Residue N75 is glycosylated (N-linked (GlcNAc...) asparagine). A disulfide bond links C87 and C320. 3 residues coordinate Zn(2+): H128, E266, and D282. N340, N380, N443, and N444 each carry an N-linked (GlcNAc...) asparagine glycan. 2 disulfides stabilise this stretch: C429–C455 and C436–C456. L-glutamate is bound by residues S511, T513, and R518. A glycan (N-linked (GlcNAc...) asparagine) is linked at N541. Residues 557-576 traverse the membrane as a helical segment; it reads VWVMMFVMLLIVSAIAVFVF. Residues 577–600 lie on the Cytoplasmic side of the membrane; that stretch reads EYFSPVGYNRNLAKGKAPHGPSFT. The tract at residues 599-620 is pore-forming; sequence FTIGKAIWLLWGLVFNNSVPVQ. Positions 601–615 form an intramembrane region, discontinuously helical; the sequence is IGKAIWLLWGLVFNN. The Cytoplasmic segment spans residues 616-625; it reads SVPVQNPKGT. A helical membrane pass occupies residues 626 to 646; it reads TSKIMVSVWAFFAVIFLASYT. At 647-814 the chain is on the extracellular side; that stretch reads ANLAAFMIQE…NEVMSSQLDI (168 aa). N687 carries N-linked (GlcNAc...) asparagine glycosylation. 3 residues coordinate L-glutamate: S689, T690, and D731. C745 and C800 are joined by a disulfide. Residues 815 to 835 form a helical membrane-spanning segment; that stretch reads DNMAGVFYMLAAAMALSLITF. Over 836-1464 the chain is Cytoplasmic; that stretch reads IWEHLFYWKL…KKMPSIESDV (629 aa). Residues S882, S890, and S929 each carry the phosphoserine modification. Composition is skewed to polar residues over residues 997-1010 and 1023-1032; these read EVAVSTESKANSRP and QDSLSQNPVS. Residues 997–1083 form a disordered region; that stretch reads EVAVSTESKA…PDNSKNHKTK (87 aa). S1025 bears the Phosphoserine mark. Basic and acidic residues-rich tracts occupy residues 1033-1043 and 1052-1061; these read QRDEATAENRT and LPEEMAHSDI. Phosphoserine is present on residues S1059 and S1062. Over residues 1070-1083 the composition is skewed to basic and acidic residues; it reads CHREPDNSKNHKTK. Phosphoserine occurs at positions 1198 and 1291. The interval 1335 to 1372 is disordered; sequence KLSGKKSSLFPQGLEDSKRSKSLLPDHTSDNPFLHSHR. A PDZ-binding motif is present at residues 1462-1464; that stretch reads SDV.

This sequence belongs to the glutamate-gated ion channel (TC 1.A.10.1) family. NR2A/GRIN2A subfamily. In terms of assembly, heterotetramer. Forms heterotetrameric channels composed of two GluN1/zeta subunits (GRIN1), and two identical GluN2/epsilon subunits (GRIN2A, GRIN2B, GRIN2C or GRIN2D) or GluN3 subunits (GRIN3A or GRIN3B) (in vitro). Can also form heterotetrameric channels that contain at least two GluN1 subunits and at least two different GluN2 subunits (or a combination of one GluN2 and one GluN3 subunits) (in vitro). In vivo, the subunit composition may depend on the expression levels of the different subunits. Found in a complex with GRIN1, GRIN3A and PPP2CB. Found in a complex with GRIN1 and GRIN3B. Interacts with AIP1. Interacts with HIP1 and NETO1. Interacts with SNX27 (via PDZ domain); the interaction is required for recycling to the plasma membrane when endocytosed and prevent degradation in lysosomes. Interacts with PDZ domains of PATJ and DLG4. Interacts with LRFN2. Interacts with RPH3A and DLG4; this ternary complex regulates NMDA receptor composition at postsynaptic membranes. Interacts with SORCS2. Interacts with ARC; preventing ARC oligomerization. Interacts (via the extreme C-terminus) with FRMPD2 (the second PDZ domain); the interaction is direct and is likely to promote NMDAR-mediated neural signal transmission. GRIN2A binds FRMPD2 with lower affinity than GRIN2B.

Its subcellular location is the cell projection. It is found in the dendritic spine. It localises to the cell membrane. The protein localises to the synapse. The protein resides in the postsynaptic cell membrane. Its subcellular location is the cytoplasmic vesicle membrane. The catalysed reaction is Ca(2+)(in) = Ca(2+)(out). It carries out the reaction Na(+)(in) = Na(+)(out). It catalyses the reaction K(+)(in) = K(+)(out). With respect to regulation, NMDA glutamate receptor activity is inhibited by endogenous Mg(2+) in a voltage-dependent manner. NMDA glutamate receptor activity is inhibited by endogenous Zn(2+). NMDA glutamate receptor activity is inhibited by endogenous protons. In terms of biological role, component of N-methyl-D-aspartate (NMDA) receptors (NMDARs) that function as heterotetrameric, ligand-gated cation channels with high calcium permeability and voltage-dependent block by Mg(2+). NMDARs participate in synaptic plasticity for learning and memory formation by contributing to the slow phase of excitatory postsynaptic current, long-term synaptic potentiation, and learning. Channel activation requires binding of the neurotransmitter L-glutamate to the GluN2 subunit, glycine or D-serine binding to the GluN1 subunit, plus membrane depolarization to eliminate channel inhibition by Mg(2+). NMDARs mediate simultaneously the potasium efflux and the influx of calcium and sodium. Each GluN2 subunit confers differential attributes to channel properties, including activation, deactivation and desensitization kinetics, pH sensitivity, Ca2(+) permeability, and binding to allosteric modulators. Participates in the synaptic plasticity regulation through activation by the L-glutamate releaseed by BEST1, into the synaptic cleft, upon F2R/PAR-1 activation in astrocyte. The protein is Glutamate receptor ionotropic, NMDA 2A of Homo sapiens (Human).